A 358-amino-acid chain; its full sequence is Heme A synthase (358 aa).

8 helical membrane-spanning segments follow: residues 25–45 (LVRYWLYAVFAVLIAIVMVGG), 111–131 (LLARFVGFLVAVPLGFFWLTG), 141–161 (MLGLLALGGLQGAIGWWMVAS), 176–196 (IHLTTACVIITAVFYIARGLV), 210–230 (FAGWIVFAVLVQIYLGGLVAG), 269–289 (VQFVHRMFAYTVLLLAILHAV), 304–324 (TIVLVGLVFIQAMIGIATLLM), and 326–346 (APLHLGLTHQFFALVVLAFAV). H273 is a binding site for heme. H334 contacts heme.

This sequence belongs to the COX15/CtaA family. Type 2 subfamily. In terms of assembly, interacts with CtaB. It depends on heme b as a cofactor.

Its subcellular location is the cell membrane. It catalyses the reaction Fe(II)-heme o + 2 A + H2O = Fe(II)-heme a + 2 AH2. It functions in the pathway porphyrin-containing compound metabolism; heme A biosynthesis; heme A from heme O: step 1/1. Catalyzes the conversion of heme O to heme A by two successive hydroxylations of the methyl group at C8. The first hydroxylation forms heme I, the second hydroxylation results in an unstable dihydroxymethyl group, which spontaneously dehydrates, resulting in the formyl group of heme A. The chain is Heme A synthase from Brucella suis (strain ATCC 23445 / NCTC 10510).